A 353-amino-acid polypeptide reads, in one-letter code: C-C chemokine receptor type 8 (353 aa).

Over 1–33 (MDYTMEPNVTMTDYYPDFFTAPCDAEFLLRGSM) the chain is Extracellular. Asn-8 carries N-linked (GlcNAc...) asparagine glycosylation. A helical transmembrane segment spans residues 34 to 61 (LYLAILYCVLFVLGLLGNSLVILVLVGC). Residues 62–71 (KKLRSITDIY) are Cytoplasmic-facing. Residues 72–91 (LLNLAASDLLFVLSIPFQTH) traverse the membrane as a helical segment. Residues 92 to 105 (NLLDQWVFGTAMCK) lie on the Extracellular side of the membrane. A disulfide bond links Cys-104 and Cys-181. A helical membrane pass occupies residues 106–127 (VVSGLYYIGFFSSMFFITLMSV). Residues 128 to 144 (DRYLAIVHAVYAIKVRT) are Cytoplasmic-facing. A helical transmembrane segment spans residues 145-169 (ASVGTALSLTVWLAAVTATIPLMVF). Over 170-200 (YQVASEDGMLQCFQFYEEQSLRWKLFTHFEI) the chain is Extracellular. Residues 201-220 (NALGLLLPFAILLFCYVRIL) form a helical membrane-spanning segment. At 221-236 (QQLRGCLNHNRTRAIK) the chain is on the cytoplasmic side. The chain crosses the membrane as a helical span at residues 237–261 (LVLTVVIVSLLFWVPFNVALFLTSL). Topologically, residues 262-278 (HDLHILDGCATRQRLAL) are extracellular. A helical transmembrane segment spans residues 279–302 (AIHVTEVISFTHCCVNPVIYAFIG). Over 303–353 (EKFKKHLMDVFQKSCSHIFLYLGRQMPVGALERQLSSNQRSSHSSTLDDIL) the chain is Cytoplasmic.

This sequence belongs to the G-protein coupled receptor 1 family. As to expression, expressed in thymus.

It is found in the cell membrane. Its function is as follows. Receptor for the CCL1/SCY1/TCA-3 chemokine. The polypeptide is C-C chemokine receptor type 8 (Ccr8) (Mus musculus (Mouse)).